The following is a 1460-amino-acid chain: Nonribosomal peptide synthetase 6 (1460 aa).

The interval 63–468 is adenylation; it reads EQAALHPEKI…GRQDQQVKLR (406 aa). The region spanning 600–675 is the Carrier 1 domain; the sequence is EPTTEMEIKL…AMATKIKPLS (76 aa). Ser636 is subject to O-(pantetheine 4'-phosphoryl)serine. The tract at residues 712–1135 is condensation; that stretch reads VQDVYPCTPL…AVLDPSEAQD (424 aa). Carrier domains are found at residues 1168-1241 and 1236-1312; these read SPNE…GNEK and SIGN…EETD. O-(pantetheine 4'-phosphoryl)serine occurs at positions 1202 and 1273. Positions 1303–1324 are disordered; sequence ELASSAEETDSPQTETNSNAPY. Residues 1313–1322 show a composition bias toward polar residues; that stretch reads SPQTETNSNA.

This sequence belongs to the NRP synthetase family.

The protein operates within siderophore biosynthesis. Its function is as follows. NRPS involved in extracellular coprogen-type siderophores biosynthesis. The role of extracellular siderophores in fungal virulence to plants is to supply iron to the fungus during plant infection, but not to act as phytotoxins, depriving their hosts of iron. The protein is Nonribosomal peptide synthetase 6 of Alternaria brassicicola (Dark leaf spot agent).